We begin with the raw amino-acid sequence, 252 residues long: 2-C-methyl-D-erythritol 4-phosphate cytidylyltransferase (252 aa).

Belongs to the IspD/TarI cytidylyltransferase family. IspD subfamily.

The catalysed reaction is 2-C-methyl-D-erythritol 4-phosphate + CTP + H(+) = 4-CDP-2-C-methyl-D-erythritol + diphosphate. The protein operates within isoprenoid biosynthesis; isopentenyl diphosphate biosynthesis via DXP pathway; isopentenyl diphosphate from 1-deoxy-D-xylulose 5-phosphate: step 2/6. Functionally, catalyzes the formation of 4-diphosphocytidyl-2-C-methyl-D-erythritol from CTP and 2-C-methyl-D-erythritol 4-phosphate (MEP). The chain is 2-C-methyl-D-erythritol 4-phosphate cytidylyltransferase from Chlorobium phaeobacteroides (strain BS1).